The primary structure comprises 623 residues: V-type proton ATPase catalytic subunit A (623 aa).

ATP is bound at residue 252 to 259 (GAFGCGKT).

This sequence belongs to the ATPase alpha/beta chains family. In terms of assembly, V-ATPase is a heteromultimeric enzyme composed of a peripheral catalytic V1 complex (main components: subunits A, B, C, D, E, and F) attached to an integral membrane V0 proton pore complex (main component: the proteolipid protein).

The enzyme catalyses ATP + H2O + 4 H(+)(in) = ADP + phosphate + 5 H(+)(out). In terms of biological role, catalytic subunit of the peripheral V1 complex of vacuolar ATPase. V-ATPase vacuolar ATPase is responsible for acidifying a variety of intracellular compartments in eukaryotic cells. This is V-type proton ATPase catalytic subunit A from Brassica napus (Rape).